We begin with the raw amino-acid sequence, 345 residues long: Protein RecA (345 aa).

65 to 72 contributes to the ATP binding site; the sequence is GPESSGKT. Residues 326 to 336 are compositionally biased toward basic and acidic residues; the sequence is EKFQPAEAARE. Positions 326–345 are disordered; the sequence is EKFQPAEAAREEGDDEGEDE.

This sequence belongs to the RecA family.

The protein localises to the cytoplasm. In terms of biological role, can catalyze the hydrolysis of ATP in the presence of single-stranded DNA, the ATP-dependent uptake of single-stranded DNA by duplex DNA, and the ATP-dependent hybridization of homologous single-stranded DNAs. It interacts with LexA causing its activation and leading to its autocatalytic cleavage. This chain is Protein RecA, found in Stenotrophomonas maltophilia (strain K279a).